A 60-amino-acid polypeptide reads, in one-letter code: UPF0291 protein CTC_01690.1 (60 aa).

It belongs to the UPF0291 family.

The protein resides in the cytoplasm. This is UPF0291 protein CTC_01690.1 from Clostridium tetani (strain Massachusetts / E88).